Here is a 207-residue protein sequence, read N- to C-terminus: ATP-dependent Clp protease proteolytic subunit (207 aa).

Ser112 serves as the catalytic Nucleophile. Residue His137 is part of the active site.

It belongs to the peptidase S14 family. Fourteen ClpP subunits assemble into 2 heptameric rings which stack back to back to give a disk-like structure with a central cavity, resembling the structure of eukaryotic proteasomes.

Its subcellular location is the cytoplasm. It catalyses the reaction Hydrolysis of proteins to small peptides in the presence of ATP and magnesium. alpha-casein is the usual test substrate. In the absence of ATP, only oligopeptides shorter than five residues are hydrolyzed (such as succinyl-Leu-Tyr-|-NHMec, and Leu-Tyr-Leu-|-Tyr-Trp, in which cleavage of the -Tyr-|-Leu- and -Tyr-|-Trp bonds also occurs).. In terms of biological role, cleaves peptides in various proteins in a process that requires ATP hydrolysis. Has a chymotrypsin-like activity. Plays a major role in the degradation of misfolded proteins. This chain is ATP-dependent Clp protease proteolytic subunit, found in Bacteroides fragilis (strain ATCC 25285 / DSM 2151 / CCUG 4856 / JCM 11019 / LMG 10263 / NCTC 9343 / Onslow / VPI 2553 / EN-2).